The sequence spans 213 residues: Small ribosomal subunit protein uS7 (213 aa).

This sequence belongs to the universal ribosomal protein uS7 family. As to quaternary structure, component of the small ribosomal subunit (SSU). Mature N.crassa ribosomes consist of a small (40S) and a large (60S) subunit. The 40S small subunit contains 1 molecule of ribosomal RNA (18S rRNA) and at least 32 different proteins. The large 60S subunit contains 3 rRNA molecules (26S, 5.8S and 5S rRNA) and at least 42 different proteins.

Its subcellular location is the cytoplasm. In terms of biological role, component of the ribosome, a large ribonucleoprotein complex responsible for the synthesis of proteins in the cell. The small ribosomal subunit (SSU) binds messenger RNAs (mRNAs) and translates the encoded message by selecting cognate aminoacyl-transfer RNA (tRNA) molecules. The large subunit (LSU) contains the ribosomal catalytic site termed the peptidyl transferase center (PTC), which catalyzes the formation of peptide bonds, thereby polymerizing the amino acids delivered by tRNAs into a polypeptide chain. The nascent polypeptides leave the ribosome through a tunnel in the LSU and interact with protein factors that function in enzymatic processing, targeting, and the membrane insertion of nascent chains at the exit of the ribosomal tunnel. The polypeptide is Small ribosomal subunit protein uS7 (rps-5) (Neurospora crassa (strain ATCC 24698 / 74-OR23-1A / CBS 708.71 / DSM 1257 / FGSC 987)).